The sequence spans 425 residues: Orexin/Hypocretin receptor type 1 (425 aa).

The interval Met-1–Pro-24 is disordered. The Extracellular segment spans residues Met-1–Glu-46. The tract at residues Asp-26–Tyr-41 is required for response to orexin-A. The chain crosses the membrane as a helical span at residues Trp-47–Val-67. Over Cys-68 to Asn-82 the chain is Cytoplasmic. Residues Tyr-83–Leu-105 traverse the membrane as a helical segment. Topologically, residues Val-106 to Cys-119 are extracellular. The cysteines at positions 119 and 202 are disulfide-linked. The chain crosses the membrane as a helical span at residues Lys-120–Ile-140. Residues Ala-141 to Arg-160 lie on the Cytoplasmic side of the membrane. A helical transmembrane segment spans residues Ala-161 to Val-182. Over Met-183 to Lys-213 the chain is Extracellular. Asn-194 carries an N-linked (GlcNAc...) asparagine glycan. A helical membrane pass occupies residues Ile-214–Tyr-235. Residues Phe-236–Lys-298 are Cytoplasmic-facing. A helical membrane pass occupies residues Met-299 to Lys-321. Asn-318 provides a ligand contact to suvorexant. Over Arg-322 to Val-336 the chain is Extracellular. Residues Tyr-337–Phe-360 traverse the membrane as a helical segment. The Cytoplasmic portion of the chain corresponds to Leu-361–Pro-425.

The protein belongs to the G-protein coupled receptor 1 family.

Its subcellular location is the cell membrane. In terms of biological role, moderately selective excitatory receptor for orexin-A and, with a lower affinity, for orexin-B neuropeptide. Triggers an increase in cytoplasmic Ca(2+) levels in response to orexin-A binding. This is Orexin/Hypocretin receptor type 1 from Homo sapiens (Human).